The following is a 272-amino-acid chain: Cerberus (272 aa).

A signal peptide spans 1–19; it reads MSLLLLQLLVLSCLGDTEP. Disulfide bonds link Cys-168/Cys-215, Cys-182/Cys-229, Cys-192/Cys-245, and Cys-196/Cys-247. Residues 168-253 form the CTCK domain; sequence CRTLPFSQSV…ECNCETQKIE (86 aa). N-linked (GlcNAc...) asparagine glycosylation is present at Asn-228.

Belongs to the DAN family.

Its subcellular location is the secreted. Cytokine that acts as a regulator of the activity of Nodal/BMP pathways during the establishment of bilateral asymmetry in the head and trunk of the embryo. The chain is Cerberus (CER1) from Gallus gallus (Chicken).